The sequence spans 513 residues: ATP synthase subunit alpha (513 aa).

An ATP-binding site is contributed by 170–177 (GDRQTGKT).

The protein belongs to the ATPase alpha/beta chains family. In terms of assembly, F-type ATPases have 2 components, CF(1) - the catalytic core - and CF(0) - the membrane proton channel. CF(1) has five subunits: alpha(3), beta(3), gamma(1), delta(1), epsilon(1). CF(0) has four main subunits: a(1), b(1), b'(1) and c(9-12).

The protein resides in the cell inner membrane. The catalysed reaction is ATP + H2O + 4 H(+)(in) = ADP + phosphate + 5 H(+)(out). Produces ATP from ADP in the presence of a proton gradient across the membrane. The alpha chain is a regulatory subunit. The chain is ATP synthase subunit alpha from Gloeobacter violaceus (strain ATCC 29082 / PCC 7421).